A 335-amino-acid chain; its full sequence is Dihydroorotate dehydrogenase (quinone) (335 aa).

FMN-binding positions include 58 to 62 and threonine 82; that span reads AGADK. Position 62 (lysine 62) interacts with substrate. 107-111 is a substrate binding site; the sequence is NRNGF. Residues asparagine 135 and asparagine 168 each contribute to the FMN site. Residue asparagine 168 coordinates substrate. The Nucleophile role is filled by serine 171. Residue asparagine 173 participates in substrate binding. FMN-binding residues include lysine 213 and glycine 241. 242–243 contacts substrate; it reads NT. Residues glycine 264, glycine 293, and 314 to 315 each bind FMN; that span reads YS.

The protein belongs to the dihydroorotate dehydrogenase family. Type 2 subfamily. Monomer. The cofactor is FMN.

It is found in the cell membrane. The catalysed reaction is (S)-dihydroorotate + a quinone = orotate + a quinol. It participates in pyrimidine metabolism; UMP biosynthesis via de novo pathway; orotate from (S)-dihydroorotate (quinone route): step 1/1. Functionally, catalyzes the conversion of dihydroorotate to orotate with quinone as electron acceptor. This is Dihydroorotate dehydrogenase (quinone) from Haemophilus ducreyi (strain 35000HP / ATCC 700724).